The chain runs to 755 residues: Putative two-component response regulator-like APRR6 (755 aa).

Residues 14–128 (SILLIDHDTA…DIKNMWQHVF (115 aa)) enclose the Response regulatory domain.

It belongs to the ARR-like family.

The protein resides in the nucleus. This is Putative two-component response regulator-like APRR6 (APRR6) from Arabidopsis thaliana (Mouse-ear cress).